We begin with the raw amino-acid sequence, 187 residues long: ECF RNA polymerase sigma factor SigK (187 aa).

The interval 30-96 is sigma-70 factor domain-2; the sequence is YDHTKSRVYG…RAVDRVRCEQ (67 aa). An Interaction with polymerase core subunit RpoC motif is present at residues 53 to 56; it reads ETTQ. A sigma-70 factor domain-4 region spans residues 133 to 182; it reads CLKALTDTQRQCIELAYYGGLTYVEVSRRLAANLSTIKSRMRDALRSLRN. The segment at residues 155-174 is a DNA-binding region (H-T-H motif); the sequence is YVEVSRRLAANLSTIKSRMR.

The protein belongs to the sigma-70 factor family. ECF subfamily. In terms of assembly, interacts transiently with the RNA polymerase catalytic core formed by RpoA, RpoB, RpoC and RpoZ (2 alpha, 1 beta, 1 beta' and 1 omega subunit) to form the RNA polymerase holoenzyme that can initiate transcription. Interacts (via sigma-70 factor domain 4) with anti-sigma-K factor RskA.

In terms of biological role, sigma factors are initiation factors that promote the attachment of RNA polymerase to specific initiation sites and are then released. Extracytoplasmic function (ECF) sigma factors are held in an inactive form by an anti-sigma factor until released by regulated intramembrane proteolysis. This is ECF RNA polymerase sigma factor SigK (sigK) from Mycobacterium tuberculosis (strain ATCC 25177 / H37Ra).